Consider the following 327-residue polypeptide: Glutamyl endopeptidase (327 aa).

The first 29 residues, 1 to 29 (MKGKFLKVSSLFVATLTTATLVSSPAANA), serve as a signal peptide directing secretion. The propeptide occupies 30-68 (LSSKAMDNHPQQSQSSKQQTPKIQKGGNLKPLEQREHAN). The tract at residues 33-61 (KAMDNHPQQSQSSKQQTPKIQKGGNLKPL) is disordered. The span at 40–54 (QQSQSSKQQTPKIQK) shows a compositional bias: low complexity. Residues H119, D161, and S237 each act as charge relay system in the active site. The tract at residues 283 to 327 (FANDDQPNNPDNPDNPNNPDNPNNPNNPDNPDNGDNNNSDNPDAA) is disordered. Over residues 286 to 327 (DDQPNNPDNPDNPNNPDNPNNPNNPDNPDNGDNNNSDNPDAA) the composition is skewed to low complexity. 9 tandem repeats follow at residues 289–291 (PNN), 292–294 (PDN), 295–297 (PDN), 298–300 (PNN), 301–303 (PDN), 304–306 (PNN), 307–309 (PNN), 310–312 (PDN), and 313–315 (PDN). Residues 289 to 315 (PNNPDNPDNPNNPDNPNNPNNPDNPDN) are 9 X 3 AA repeats of P-[DN]-N.

Belongs to the peptidase S1B family. In terms of processing, proteolytically cleaved by aureolysin (aur). This cleavage leads to the activation of SspA.

Its subcellular location is the secreted. The catalysed reaction is Preferential cleavage: Glu-|-Xaa, Asp-|-Xaa.. Preferentially cleaves peptide bonds on the carboxyl-terminal side of aspartate and glutamate. Along with other extracellular proteases it is involved in colonization and infection of human tissues. Required for proteolytic maturation of thiol protease SspB and inactivation of SspC, an inhibitor of SspB. It is the most important protease for degradation of fibronectin-binding protein (FnBP) and surface protein A, which are involved in adherence to host cells. May also protect bacteria against host defense mechanism by cleaving the immunoglobulin classes IgG, IgA and IgM. May be involved in the stability of secreted lipases. The protein is Glutamyl endopeptidase (sspA) of Staphylococcus aureus (strain MW2).